The following is a 481-amino-acid chain: Solute carrier family 46 member 2 (481 aa).

The Cytoplasmic segment spans residues 1-37; the sequence is MGPEAAGPGRGAAPRLQVRTWIEPVVAATQVASSLYE. Residues 38–58 traverse the membrane as a helical segment; sequence AGLLLVVKASFGAGAGAGAGA. The Extracellular segment spans residues 59 to 83; the sequence is ASNHSAGPPRGAPEDQQQRAISNFY. The N-linked (GlcNAc...) asparagine glycan is linked to Asn61. The chain crosses the membrane as a helical span at residues 84-104; sequence IVYNLVVGLTPLLSAYALGWL. Residues 105-113 are Cytoplasmic-facing; the sequence is SDRRHRKVA. A helical membrane pass occupies residues 114 to 134; that stretch reads ICVALLGFLLSRVGLLLKVLL. Topologically, residues 135-143 are extracellular; the sequence is DWPVEVLYG. Residues 144 to 164 form a helical membrane-spanning segment; sequence AAALNGLCGGFSAFWAGVMAL. Topologically, residues 165–179 are cytoplasmic; the sequence is GSLGSSEGRRSVRLV. The chain crosses the membrane as a helical span at residues 180–200; the sequence is LIDLILGLAGFCGSMASGHLF. The Extracellular segment spans residues 201–210; the sequence is KQVAGHSGQG. The chain crosses the membrane as a helical span at residues 211-231; the sequence is LVLTACSVSCATFALLYSLLV. At 232–286 the chain is on the cytoplasmic side; that stretch reads LKVPEAAAGSGQALSAGDSVAGTVGTYRTLDPDHSDKQSVQGLHPPSPGKAKPRR. Residues 263 to 282 are disordered; that stretch reads PDHSDKQSVQGLHPPSPGKA. The chain crosses the membrane as a helical span at residues 287-307; the sequence is TIIALLFLGAIVYDLAVVGTV. Over 308–326 the chain is Extracellular; sequence DVMPLFVLREPLSWNQVQV. A helical transmembrane segment spans residues 327-347; that stretch reads GYGMAAGYTIFITSFLGVLVF. Topologically, residues 348-353 are cytoplasmic; it reads SRCFQD. The chain crosses the membrane as a helical span at residues 354 to 374; the sequence is TTMIMIGMVSFGSGALLLAFV. Over 375 to 376 the chain is Extracellular; it reads KE. Residues 377 to 397 traverse the membrane as a helical segment; sequence TYMFYIARAVMLFALIPITTI. Residues 398 to 412 lie on the Cytoplasmic side of the membrane; that stretch reads RSAMSKLIKGSSYGK. The chain crosses the membrane as a helical span at residues 413–433; that stretch reads VFVILQLSLTLTGVVTSTVYN. Residues 434-446 are Extracellular-facing; sequence KIYQVTMEKFIGT. Residues 447 to 467 traverse the membrane as a helical segment; that stretch reads CFALSSFLSFLAIIPIGIVAY. Over 468–481 the chain is Cytoplasmic; that stretch reads KQASWLQYGDVRET.

Belongs to the major facilitator superfamily. SLC46A family. Post-translationally, glycosylated. Highly expressed by the epididymal duct epithelium.

It localises to the endosome membrane. The protein resides in the cell membrane. It carries out the reaction N-acetyl-beta-D-glucosaminyl-(1-&gt;4)-1,6-anhydro-N-acetyl-beta-D-muramoyl-L-alanyl-gamma-D-glutamyl-meso-2,6-diaminopimeloyl-D-alanine(out) + n H(+)(out) = N-acetyl-beta-D-glucosaminyl-(1-&gt;4)-1,6-anhydro-N-acetyl-beta-D-muramoyl-L-alanyl-gamma-D-glutamyl-meso-2,6-diaminopimeloyl-D-alanine(in) + n H(+)(in). The enzyme catalyses L-alanyl-gamma-D-glutamyl-meso-2,6-diaminopimelate(out) + n H(+)(out) = L-alanyl-gamma-D-glutamyl-meso-2,6-diaminopimelate(in) + n H(+)(in). The catalysed reaction is N-acetyl-D-muramoyl-L-alanyl-D-isoglutamine(out) + n H(+)(out) = N-acetyl-D-muramoyl-L-alanyl-D-isoglutamine(in) + n H(+)(in). It catalyses the reaction 2',3'-cGAMP(out) + n H(+)(out) = 2',3'-cGAMP(in) + n H(+)(in). It carries out the reaction 3',3'-cGAMP(out) + n H(+)(out) = 3',3'-cGAMP(in) + n H(+)(in). Functionally, proton-coupled transporter that delivers pathogen-associated or danger-associated molecular patterns to cytosolic pattern recognition receptors as part of the innate immune response to microbes or tissue injury. Has selectivity toward muropeptides that contain the amino acid diaminopimelic acid (DAP-type peptidoglycan muropeptides) including Tri-DAP and tracheal toxin (TCT), common in Gram-negative bacteria and Gram-positive bacilli. In the context of immune recognition of skin microbiota, shuttles bacterial muropeptides across the endolysosomal membranes into the cytosol for recognition by NOD1, triggering MYD88-dependent secretion of IL1A and neutrophil recruitment in a pyroptosis-type inflammatory process. To a lesser extent and redundantly, transports muramyl dipeptides derived from most bacterial proteoglycans, eliciting NOD2 receptor activation and downstream inflammatory responses. Postulated to function as an importer of cyclic GMP-AMP dinucleotides (cGAMPs) in monocyte and macrophage cell lineages. Selectively imports cGAMPs derived from pathogenic bacteria such as 3'3'-cGAMP thus providing for differential immune recognition of pathogenic versus commensal bacteria. During tumorigenesis may transport extracellular tumor-derived 2'3'-cGAMP across the plasma membrane of M1-polarized macrophages to activate the anti-tumoral stimulator of interferon genes (STING) pathway. The transport mechanism, its electrogenicity and stoichiometry remain to be elucidated. The sequence is that of Solute carrier family 46 member 2 from Canis lupus familiaris (Dog).